The following is a 254-amino-acid chain: Aspartate/glutamate leucyltransferase (254 aa).

This sequence belongs to the R-transferase family. Bpt subfamily.

Its subcellular location is the cytoplasm. It carries out the reaction N-terminal L-glutamyl-[protein] + L-leucyl-tRNA(Leu) = N-terminal L-leucyl-L-glutamyl-[protein] + tRNA(Leu) + H(+). It catalyses the reaction N-terminal L-aspartyl-[protein] + L-leucyl-tRNA(Leu) = N-terminal L-leucyl-L-aspartyl-[protein] + tRNA(Leu) + H(+). Functions in the N-end rule pathway of protein degradation where it conjugates Leu from its aminoacyl-tRNA to the N-termini of proteins containing an N-terminal aspartate or glutamate. This is Aspartate/glutamate leucyltransferase from Xylella fastidiosa (strain M12).